A 261-amino-acid chain; its full sequence is Glandular kallikrein-7, submandibular/renal (261 aa).

The signal sequence occupies residues 1–18 (MWFLILFLDLSLGQIDAA). Positions 19-24 (PPGQSR) are cleaved as a propeptide — activation peptide. Residues 25–258 (VIGGYKCEKN…FTSWIKEVMK (234 aa)) enclose the Peptidase S1 domain. 5 disulfides stabilise this stretch: C31-C173, C50-C66, C152-C219, C184-C198, and C209-C234. H65 functions as the Charge relay system in the catalytic mechanism. Residue N108 is glycosylated (N-linked (GlcNAc...) asparagine). D120 (charge relay system) is an active-site residue. The active-site Charge relay system is the S213.

It belongs to the peptidase S1 family. Kallikrein subfamily. In terms of tissue distribution, kidney and submandibular gland. Not expressed in liver, pancreas, spleen, parotid, testis, cortex, prostate, ovary and pituitary.

It carries out the reaction Preferential cleavage of Arg-|-Xaa bonds in small molecule substrates. Highly selective action to release kallidin (lysyl-bradykinin) from kininogen involves hydrolysis of Met-|-Xaa or Leu-|-Xaa.. Glandular kallikreins cleave Met-Lys and Arg-Ser bonds in kininogen to release Lys-bradykinin. Predominant kallikrein protein in the kidney. The protein is Glandular kallikrein-7, submandibular/renal (Klk7) of Rattus norvegicus (Rat).